A 118-amino-acid chain; its full sequence is MTHLHITTWVVALILLFVSYSLYSSGSAKGAKITHMILRLFYILIILTGAELFVRFANWNGEYAGKMILGIITIGLMEMLLIRKKKEKSTGGLWVGFVIVLLLTVLLGLHLPIGFQLF.

4 helical membrane-spanning segments follow: residues 4 to 24, 33 to 53, 62 to 82, and 93 to 113; these read LHIT…SLYS, ITHM…AELF, EYAG…MLLI, and LWVG…HLPI.

It belongs to the UPF0344 family.

Its subcellular location is the cell membrane. This chain is UPF0344 protein YisL (yisL), found in Bacillus subtilis (strain 168).